A 217-amino-acid polypeptide reads, in one-letter code: Adenylate kinase (217 aa).

11 to 16 is an ATP binding site; sequence GAGKGT. Positions 31–60 are NMP; it reads STGDMFREAMANETPVGLEAKSYIDKGDLV. AMP-binding positions include threonine 32, arginine 37, 58 to 60, 86 to 89, and glutamine 93; these read DLV and GFPR. An LID region spans residues 127–165; it reads ARYICKNCGATYNKISNPTKVEGTCDRCGGHEFFQREDD. Residue arginine 128 coordinates ATP. 2 residues coordinate Zn(2+): cysteine 131 and cysteine 134. 137–138 provides a ligand contact to ATP; that stretch reads TY. 2 residues coordinate Zn(2+): cysteine 151 and cysteine 154. Residues arginine 162 and arginine 173 each contribute to the AMP site. Glutamine 201 serves as a coordination point for ATP.

It belongs to the adenylate kinase family. Monomer.

It localises to the cytoplasm. It catalyses the reaction AMP + ATP = 2 ADP. It participates in purine metabolism; AMP biosynthesis via salvage pathway; AMP from ADP: step 1/1. Its function is as follows. Catalyzes the reversible transfer of the terminal phosphate group between ATP and AMP. Plays an important role in cellular energy homeostasis and in adenine nucleotide metabolism. This is Adenylate kinase from Lactobacillus gasseri (strain ATCC 33323 / DSM 20243 / BCRC 14619 / CIP 102991 / JCM 1131 / KCTC 3163 / NCIMB 11718 / NCTC 13722 / AM63).